The chain runs to 141 residues: Nucleoside diphosphate kinase (141 aa).

ATP contacts are provided by Lys-11, Phe-59, Arg-87, Thr-93, Arg-104, and Asn-114. His-117 serves as the catalytic Pros-phosphohistidine intermediate.

The protein belongs to the NDK family. As to quaternary structure, homotetramer. Mg(2+) is required as a cofactor.

It is found in the cytoplasm. The catalysed reaction is a 2'-deoxyribonucleoside 5'-diphosphate + ATP = a 2'-deoxyribonucleoside 5'-triphosphate + ADP. The enzyme catalyses a ribonucleoside 5'-diphosphate + ATP = a ribonucleoside 5'-triphosphate + ADP. Functionally, major role in the synthesis of nucleoside triphosphates other than ATP. The ATP gamma phosphate is transferred to the NDP beta phosphate via a ping-pong mechanism, using a phosphorylated active-site intermediate. This Polynucleobacter asymbioticus (strain DSM 18221 / CIP 109841 / QLW-P1DMWA-1) (Polynucleobacter necessarius subsp. asymbioticus) protein is Nucleoside diphosphate kinase.